We begin with the raw amino-acid sequence, 498 residues long: Cytochrome P450 71B31 (498 aa).

The helical transmembrane segment at 3–23 (MFLGLLFLFPLFFILFKNLLP) threads the bilayer. Residue C441 coordinates heme.

Belongs to the cytochrome P450 family. The cofactor is heme.

The protein resides in the membrane. This chain is Cytochrome P450 71B31 (CYP71B31), found in Arabidopsis thaliana (Mouse-ear cress).